Reading from the N-terminus, the 423-residue chain is Glutamyl-tRNA reductase 2 (423 aa).

Residues 48–51 (TCYR), Ser103, 108–110 (EPQ), and Gln114 each bind substrate. The active-site Nucleophile is the Cys49. 183–188 (GAGEMA) contributes to the NADP(+) binding site.

It belongs to the glutamyl-tRNA reductase family. As to quaternary structure, homodimer.

The catalysed reaction is (S)-4-amino-5-oxopentanoate + tRNA(Glu) + NADP(+) = L-glutamyl-tRNA(Glu) + NADPH + H(+). The protein operates within porphyrin-containing compound metabolism; protoporphyrin-IX biosynthesis; 5-aminolevulinate from L-glutamyl-tRNA(Glu): step 1/2. In terms of biological role, catalyzes the NADPH-dependent reduction of glutamyl-tRNA(Glu) to glutamate 1-semialdehyde (GSA). The chain is Glutamyl-tRNA reductase 2 from Anaeromyxobacter sp. (strain Fw109-5).